Consider the following 404-residue polypeptide: Serine/threonine-protein phosphatase 2A regulatory subunit rsa-1 (404 aa).

Part of a complex consisting of a common heterodimeric core enzyme, composed of catalytic subunit let-92 and constant regulatory subunit paa-1, that associates with a variety of regulatory subunits which confer distinct properties to the holoenzyme. Interacts with rsa-2, spd-5 and tpxl-1.

The protein localises to the cytoplasm. Its subcellular location is the cytoskeleton. The protein resides in the microtubule organizing center. It localises to the centrosome. In terms of biological role, regulatory subunit of phosphatase let-92 which recruits let-92/paa-1 complex to the centrosomes, thereby regulating microtubule outgrowth from centrosomes and mitotic spindle assembly ensuring the stability of kinetochore microtubules. This Caenorhabditis elegans protein is Serine/threonine-protein phosphatase 2A regulatory subunit rsa-1.